The following is a 28-amino-acid chain: Small integral membrane protein 47 (28 aa).

A helical membrane pass occupies residues 7 to 24 (VTLAMALFTILTSIYFFN).

Its subcellular location is the membrane. The chain is Small integral membrane protein 47 from Homo sapiens (Human).